We begin with the raw amino-acid sequence, 199 residues long: Puromycin N-acetyltransferase (199 aa).

Residues 6–198 (PTVRLATRDD…RTWCMTRKPG (193 aa)) form the N-acetyltransferase domain.

Detoxification of puromycin. In Streptomyces alboniger, this protein is Puromycin N-acetyltransferase (pac).